Consider the following 285-residue polypeptide: Glutamate racemase (285 aa).

Substrate is bound by residues 28–29 (DS) and 60–61 (YG). The active-site Proton donor/acceptor is the Cys-92. A substrate-binding site is contributed by 93–94 (NT). Cys-204 (proton donor/acceptor) is an active-site residue. Substrate is bound at residue 205–206 (TH).

This sequence belongs to the aspartate/glutamate racemases family.

It carries out the reaction L-glutamate = D-glutamate. It functions in the pathway cell wall biogenesis; peptidoglycan biosynthesis. In terms of biological role, provides the (R)-glutamate required for cell wall biosynthesis. The chain is Glutamate racemase from Escherichia coli O6:H1 (strain CFT073 / ATCC 700928 / UPEC).